The primary structure comprises 171 residues: MPQQNSYSKEDLVKAGTGELFGEGNSQLPSDNMLMMDRIITISEEGGENGKGFILAELDITPDLWFFDCHFKGDPVMPGCLGLDAMWQLVGFFLAWTGGPGKGRALGVGEVKFTGQILPTAKKVTFKIDFKRVIKRKLYMGLADGSVSVDGREIYTAKDLKVGLFTDTSKF.

The active site involves His-70.

It belongs to the thioester dehydratase family. FabA subfamily. In terms of assembly, homodimer.

It is found in the cytoplasm. The catalysed reaction is a (3R)-hydroxyacyl-[ACP] = a (2E)-enoyl-[ACP] + H2O. The enzyme catalyses (3R)-hydroxydecanoyl-[ACP] = (2E)-decenoyl-[ACP] + H2O. It catalyses the reaction (2E)-decenoyl-[ACP] = (3Z)-decenoyl-[ACP]. It participates in lipid metabolism; fatty acid biosynthesis. In terms of biological role, necessary for the introduction of cis unsaturation into fatty acids. Catalyzes the dehydration of (3R)-3-hydroxydecanoyl-ACP to E-(2)-decenoyl-ACP and then its isomerization to Z-(3)-decenoyl-ACP. Can catalyze the dehydratase reaction for beta-hydroxyacyl-ACPs with saturated chain lengths up to 16:0, being most active on intermediate chain length. The polypeptide is 3-hydroxydecanoyl-[acyl-carrier-protein] dehydratase (Colwellia psychrerythraea (strain 34H / ATCC BAA-681) (Vibrio psychroerythus)).